Consider the following 429-residue polypeptide: Alpha-L-rhamnosidase rgxB (429 aa).

The N-terminal stretch at 1-20 is a signal peptide; the sequence is MAPIALKILLFTSLIVPSIS. Asn67, Asn77, Asn97, Asn103, Asn112, Asn135, and Asn219 each carry an N-linked (GlcNAc...) asparagine glycan. A PbH1 1 repeat occupies 217–238; it reads SKNITLTNWEVVNGDDSISTKA. The active-site Proton donor is the Asp231. Asn239, Asn247, Asn278, and Asn344 each carry an N-linked (GlcNAc...) asparagine glycan. PbH1 repeat units follow at residues 240-260 and 271-292; these read STDITIANCTFTSGLGIAIGS and VERLKISNITYEKTTHAVYFKT. Cysteines 374 and 380 form a disulfide. N-linked (GlcNAc...) asparagine glycans are attached at residues Asn387, Asn395, and Asn414.

The protein belongs to the glycosyl hydrolase 28 family.

The protein localises to the secreted. It carries out the reaction Hydrolysis of terminal non-reducing alpha-L-rhamnose residues in alpha-L-rhamnosides.. Functionally, alpha-L-rhamnosidase which is able to degrade p-nitrophenyl-alpha-L-rhamnopyranoside (pnp_Rha). The natural substrate of this enzyme has not been identified yet. This chain is Alpha-L-rhamnosidase rgxB (rgxB), found in Aspergillus niger (strain ATCC MYA-4892 / CBS 513.88 / FGSC A1513).